Here is a 307-residue protein sequence, read N- to C-terminus: Mycothiol acetyltransferase (307 aa).

2 N-acetyltransferase domains span residues 12 to 157 (TRTD…PPLP) and 160 to 307 (VTLR…YQLG). E43 contacts 1D-myo-inositol 2-(L-cysteinylamino)-2-deoxy-alpha-D-glucopyranoside. 87–89 (LAV) contacts acetyl-CoA. 1D-myo-inositol 2-(L-cysteinylamino)-2-deoxy-alpha-D-glucopyranoside-binding residues include E187, K227, and E239. Residues 243–245 (LGV) and 250–256 (HGGGLGK) each bind acetyl-CoA. Y278 lines the 1D-myo-inositol 2-(L-cysteinylamino)-2-deoxy-alpha-D-glucopyranoside pocket.

Belongs to the acetyltransferase family. MshD subfamily. Monomer.

It catalyses the reaction 1D-myo-inositol 2-(L-cysteinylamino)-2-deoxy-alpha-D-glucopyranoside + acetyl-CoA = mycothiol + CoA + H(+). Its function is as follows. Catalyzes the transfer of acetyl from acetyl-CoA to desacetylmycothiol (Cys-GlcN-Ins) to form mycothiol. In Salinispora tropica (strain ATCC BAA-916 / DSM 44818 / JCM 13857 / NBRC 105044 / CNB-440), this protein is Mycothiol acetyltransferase.